A 420-amino-acid chain; its full sequence is PHO85 cyclin-6 (420 aa).

Disordered regions lie at residues 1–82, 134–155, and 268–321; these read MSIK…ESSF, QGTHTVQSSTQEDKILDGDTSN, and VTTT…GVQR. Over residues 7-22 the composition is skewed to low complexity; that stretch reads SPSSTNASSSPKSTYS. The residue at position 61 (Ser61) is a Phosphoserine. The span at 134-143 shows a compositional bias: polar residues; it reads QGTHTVQSST. Basic and acidic residues predominate over residues 277-296; it reads AKHESPSNESSLDKANRGAD. A phosphoserine mark is found at Ser281 and Ser312. The span at 307-316 shows a compositional bias: acidic residues; the sequence is NENDDSDDEN. Thr317 carries the post-translational modification Phosphothreonine.

It belongs to the cyclin family. PHO80 subfamily. As to quaternary structure, forms a cyclin-CDK complex with PHO85. Interacts with the substrate protein YJL084C. Interacts with elongin-C, which stabilizes PCL6. Interacts with the CDK inhibitor (CKI) PHO81.

It is found in the cytoplasm. The protein resides in the nucleus. Functionally, cyclin partner of the cyclin-dependent kinase (CDK) PHO85. Together with cyclin PCL7, controls glycogen phosphorylase and glycogen synthase activities in response to nutrient availablility. The PCL6-PHO85 cyclin-CDK holoenzyme has GLC8 kinase activity and phosphorylates and inactivates the phosphatase PP1-2 inhibitor GLC8, causing activation of PP1-2, which then dephosphorylates and activates glycogen phosphorylase. PCL6-PHO85 also phosphorylates YJL084C. This chain is PHO85 cyclin-6 (PCL6), found in Saccharomyces cerevisiae (strain ATCC 204508 / S288c) (Baker's yeast).